The sequence spans 100 residues: Small ribosomal subunit protein uS14c (100 aa).

The protein belongs to the universal ribosomal protein uS14 family. As to quaternary structure, part of the 30S ribosomal subunit.

The protein localises to the plastid. The protein resides in the chloroplast. In terms of biological role, binds 16S rRNA, required for the assembly of 30S particles. This is Small ribosomal subunit protein uS14c from Oedogonium cardiacum (Filamentous green alga).